A 93-amino-acid chain; its full sequence is Exodeoxyribonuclease 7 small subunit (93 aa).

Residues 1–22 (MAKTASPGATPPGNGAEPLPDN) form a disordered region.

Belongs to the XseB family. As to quaternary structure, heterooligomer composed of large and small subunits.

The protein localises to the cytoplasm. It carries out the reaction Exonucleolytic cleavage in either 5'- to 3'- or 3'- to 5'-direction to yield nucleoside 5'-phosphates.. Functionally, bidirectionally degrades single-stranded DNA into large acid-insoluble oligonucleotides, which are then degraded further into small acid-soluble oligonucleotides. The sequence is that of Exodeoxyribonuclease 7 small subunit from Burkholderia multivorans (strain ATCC 17616 / 249).